Here is a 173-residue protein sequence, read N- to C-terminus: Transcription factor E (173 aa).

An HTH TFE/IIEalpha-type domain is found at 9–92 (ADKAIFAYLH…LWELELDNMY (84 aa)).

It belongs to the TFE family. Monomer. Interaction with RNA polymerase subunits RpoF and RpoE is necessary for Tfe stimulatory transcription activity. Able to interact with Tbp and RNA polymerase in the absence of DNA promoter. Interacts both with the preinitiation and elongation complexes.

Transcription factor that plays a role in the activation of archaeal genes transcribed by RNA polymerase. Facilitates transcription initiation by enhancing TATA-box recognition by TATA-box-binding protein (Tbp), and transcription factor B (Tfb) and RNA polymerase recruitment. Not absolutely required for transcription in vitro, but particularly important in cases where Tbp or Tfb function is not optimal. It dynamically alters the nucleic acid-binding properties of RNA polymerases by stabilizing the initiation complex and destabilizing elongation complexes. Seems to translocate with the RNA polymerase following initiation and acts by binding to the non template strand of the transcription bubble in elongation complexes. This chain is Transcription factor E, found in Methanospirillum hungatei JF-1 (strain ATCC 27890 / DSM 864 / NBRC 100397 / JF-1).